Reading from the N-terminus, the 129-residue chain is Transcriptional activator protein (129 aa).

The Nuclear localization signal signature appears at 13 to 28 (KAQHRAAKRRAIRRRR). A zinc finger lies at 33 to 50 (CGCSIYIHIDCRNNGFTH). The segment at 73–118 (LFQDNQRRGSPLHQHQDIPLTNQVQPQPEESIGSPQGISQLPSMDD) is disordered. Residues 91–114 (PLTNQVQPQPEESIGSPQGISQLP) are compositionally biased toward polar residues. The interval 115-129 (SMDDIDDSFWENLFK) is transactivation.

Belongs to the geminiviridae transcriptional activator protein family. In terms of assembly, monomer. Homodimer. Homooligomer. Self-interaction correlates with nuclear localization and efficient activation of transcription. Monomers suppress local silencing by interacting with and inactivating host adenosine kinase (ADK) in the cytoplasm. Interacts with and inhibits host SNF1 kinase. Binds to ssDNA. In terms of processing, phosphorylated.

It is found in the host nucleus. The protein resides in the host cytoplasm. Its function is as follows. Strong activator of the late viral genes promoters. Enhances the expression of the capsid protein and nuclear shuttle protein. Acts as a suppressor of RNA-mediated gene silencing, also known as post-transcriptional gene silencing (PTGS), a mechanism of plant viral defense that limits the accumulation of viral RNAs. Suppresses the host RNA silencing by inhibiting adenosine kinase (ADK), a kinase involved in a general methylation pathway. Also suppresses the host basal defense by interacting with and inhibiting SNF1 kinase, a key regulator of cell metabolism implicated in innate antiviral defense. Determines pathogenicity. The protein is Transcriptional activator protein of Tomato golden mosaic virus (strain Yellow vein) (TGMV).